A 583-amino-acid chain; its full sequence is Ankyrin repeat-containing protein NPR4 (583 aa).

7 ANK repeats span residues 68–97, 119–148, 154–183, 188–218, 223–252, 257–286, and 291–321; these read HNDTDLHVAARGGDAGALRRALDEAAAAVA, AGETPLVAAAERGHLEVVRELLRHLDAEGV, SGYDALHVAAREGRHAVVQEMLLHNRLLAK, ANTSPLISAATRGHTEVVKLLLELDDFGLVE, NGKNSLHFAARQGHVEIVKALLEKDPQLAR, KGQTALHMAVKGTNCDVLRALVDADPAIVM, and NGNTALHVATRKKRAEIVAVLLRLPDTHVNA. Helical transmembrane passes span 414–434, 452–472, 492–512, and 518–538; these read VTVVAVLFATVAFAAIFTVPG, IFFIFNAIALFTSLAVVVVQI, LMWLASVCTTISFIASCYIVL, and WAALLVSLIGGITMAGVLGTM.

It localises to the cell membrane. Functionally, involved in salt stress tolerance. In Oryza sativa subsp. japonica (Rice), this protein is Ankyrin repeat-containing protein NPR4.